The sequence spans 424 residues: 3-phosphoshikimate 1-carboxyvinyltransferase (424 aa).

3 residues coordinate 3-phosphoshikimate: Lys21, Ser22, and Arg26. Residue Lys21 participates in phosphoenolpyruvate binding. Residues Gly92 and Arg120 each contribute to the phosphoenolpyruvate site. 3-phosphoshikimate-binding residues include Ser163, Ser164, Gln165, Ser191, Asp306, and Lys333. Gln165 is a binding site for phosphoenolpyruvate. Catalysis depends on Asp306, which acts as the Proton acceptor. Arg337, Arg379, and Lys405 together coordinate phosphoenolpyruvate.

Belongs to the EPSP synthase family. As to quaternary structure, monomer.

It localises to the cytoplasm. It carries out the reaction 3-phosphoshikimate + phosphoenolpyruvate = 5-O-(1-carboxyvinyl)-3-phosphoshikimate + phosphate. It functions in the pathway metabolic intermediate biosynthesis; chorismate biosynthesis; chorismate from D-erythrose 4-phosphate and phosphoenolpyruvate: step 6/7. Functionally, catalyzes the transfer of the enolpyruvyl moiety of phosphoenolpyruvate (PEP) to the 5-hydroxyl of shikimate-3-phosphate (S3P) to produce enolpyruvyl shikimate-3-phosphate and inorganic phosphate. The chain is 3-phosphoshikimate 1-carboxyvinyltransferase from Clostridium perfringens (strain ATCC 13124 / DSM 756 / JCM 1290 / NCIMB 6125 / NCTC 8237 / Type A).